A 219-amino-acid polypeptide reads, in one-letter code: 2-hydroxy-3-keto-5-methylthiopentenyl-1-phosphate phosphatase (219 aa).

This sequence belongs to the HAD-like hydrolase superfamily. MtnX family.

It carries out the reaction 2-hydroxy-5-methylsulfanyl-3-oxopent-1-enyl phosphate + H2O = 1,2-dihydroxy-5-(methylsulfanyl)pent-1-en-3-one + phosphate. Its pathway is amino-acid biosynthesis; L-methionine biosynthesis via salvage pathway; L-methionine from S-methyl-5-thio-alpha-D-ribose 1-phosphate: step 4/6. Dephosphorylates 2-hydroxy-3-keto-5-methylthiopentenyl-1-phosphate (HK-MTPenyl-1-P) yielding 1,2-dihydroxy-3-keto-5-methylthiopentene (DHK-MTPene). In Bacillus mycoides (strain KBAB4) (Bacillus weihenstephanensis), this protein is 2-hydroxy-3-keto-5-methylthiopentenyl-1-phosphate phosphatase.